The primary structure comprises 495 residues: Cysteine--tRNA ligase (495 aa).

Residue C29 participates in Zn(2+) binding. The 'HIGH' region motif lies at 31–41 (PTVYDYGHIGN). C211, H236, and E240 together coordinate Zn(2+). The 'KMSKS' region signature appears at 268-272 (KMSKS). K271 contributes to the ATP binding site.

The protein belongs to the class-I aminoacyl-tRNA synthetase family. Monomer. Zn(2+) serves as cofactor.

The protein localises to the cytoplasm. It carries out the reaction tRNA(Cys) + L-cysteine + ATP = L-cysteinyl-tRNA(Cys) + AMP + diphosphate. The chain is Cysteine--tRNA ligase from Koribacter versatilis (strain Ellin345).